The sequence spans 307 residues: Ornithine carbamoyltransferase (307 aa).

Carbamoyl phosphate is bound by residues 56–59 (STRT), glutamine 83, arginine 107, and 134–137 (HPCQ). L-ornithine-binding positions include asparagine 165, aspartate 223, and 227 to 228 (SM). Carbamoyl phosphate contacts are provided by residues 263–264 (CL) and arginine 291.

This sequence belongs to the aspartate/ornithine carbamoyltransferase superfamily. OTCase family.

The protein localises to the cytoplasm. The catalysed reaction is carbamoyl phosphate + L-ornithine = L-citrulline + phosphate + H(+). The protein operates within amino-acid biosynthesis; L-arginine biosynthesis; L-arginine from L-ornithine and carbamoyl phosphate: step 1/3. Functionally, reversibly catalyzes the transfer of the carbamoyl group from carbamoyl phosphate (CP) to the N(epsilon) atom of ornithine (ORN) to produce L-citrulline. The polypeptide is Ornithine carbamoyltransferase (Cupriavidus pinatubonensis (strain JMP 134 / LMG 1197) (Cupriavidus necator (strain JMP 134))).